Consider the following 1099-residue polypeptide: Transmembrane protein 132D (1099 aa).

Residues 1–30 form the signal peptide; that stretch reads MCPSEMGTLWHHWSPVLISLAALFSKVTEG. Residues 31–915 are Extracellular-facing; that stretch reads RGILESIQRF…LMQASKGLSD (885 aa). Residue Asn505 is glycosylated (N-linked (GlcNAc...) asparagine). The disordered stretch occupies residues 797 to 858; that stretch reads FGQNDANPNT…LMEGRGTTTD (62 aa). A compositionally biased stretch (low complexity) spans 835–848; it reads GSQEGQYYGSSSMG. Residues 916–936 traverse the membrane as a helical segment; sequence LEIGMYALLGVFCLAILVFLI. At 937 to 1099 the chain is on the cytoplasmic side; it reads NCVTFALKYR…NYMERLHENV (163 aa).

This sequence belongs to the TMEM132 family. As to quaternary structure, interacts (via C-terminus) with NCKAP. Expressed in mature oligodendrocytes. Detected in the brain, lung, pancreas and testis. Highly expressed in mature neurons of the adult nervous system.

It is found in the membrane. In terms of biological role, regulate neuronals morphology via inhibition of the WAVE regulatory complex (WCR), a complex that controls F-actin cytoskeletal dynamics. This Homo sapiens (Human) protein is Transmembrane protein 132D.